A 343-amino-acid chain; its full sequence is Malate dehydrogenase, peroxisomal (343 aa).

NAD(+) contacts are provided by residues 8–14 (GASGGVG) and Asp-34. The substrate site is built by Arg-80 and Arg-86. Residues Asn-93 and 116 to 118 (ISN) contribute to the NAD(+) site. Positions 118 and 152 each coordinate substrate. The Proton acceptor role is filled by His-187. NAD(+) is bound at residue Met-237.

This sequence belongs to the LDH/MDH superfamily. MDH type 1 family. Homodimer.

Its subcellular location is the peroxisome. It carries out the reaction (S)-malate + NAD(+) = oxaloacetate + NADH + H(+). This Saccharomyces cerevisiae (strain ATCC 204508 / S288c) (Baker's yeast) protein is Malate dehydrogenase, peroxisomal (MDH3).